A 353-amino-acid polypeptide reads, in one-letter code: Cyclic GMP-AMP synthase-like receptor (353 aa).

ATP is bound by residues Ser-60 and 72–74; that span reads EYD. Mg(2+) is bound by residues Glu-72, Asp-74, and Asp-183. Residue Asp-183 participates in GTP binding. Lys-245 provides a ligand contact to ATP. Mn(2+)-binding residues include Leu-269 and Glu-270.

Belongs to the mab-21 family. Mg(2+) is required as a cofactor. Mn(2+) serves as cofactor.

It catalyses the reaction GTP + ATP = 2',3'-cGAMP + 2 diphosphate. The catalysed reaction is GTP + ATP = pppGp(2'-5')A + diphosphate. The enzyme catalyses pppGp(2'-5')A = 2',3'-cGAMP + diphosphate. In terms of biological role, nucleotidyltransferase that catalyzes the formation of cyclic GMP-AMP (2',3'-cGAMP) from ATP and GTP and plays a key role in innate immunity. Acts as a key sensor of double-stranded RNA (dsRNA), the presence of dsRNA in the cytoplasm being a danger signal that triggers the immune responses. Directly binds dsRNA, activating the nucleotidyltransferase activity, leading to synthesis of 2',3'-cGAMP, a second messenger that binds to and activates Sting, thereby triggering the immune response via activation of the NF-kappa-B transcription factor. In Nicrophorus vespilloides (Boreal carrion beetle), this protein is Cyclic GMP-AMP synthase-like receptor.